We begin with the raw amino-acid sequence, 185 residues long: Intraflagellar transport protein 22 homolog (185 aa).

Residues 10-17 (GPCESGKT), 63-67 (DCGGD), and 123-126 (HKPG) each bind GTP. Ser137 carries the post-translational modification Phosphoserine.

The protein belongs to the small GTPase superfamily. Rab family. Component of the IFT complex B, at least composed of IFT20, IFT22, IFT25, IFT27, IFT46, IFT52, TRAF3IP1/IFT54, IFT57, IFT74, IFT80, IFT81, and IFT88. Interacts with IFT88. Interacts with CFAP61.

It localises to the cell projection. Its subcellular location is the cilium. Its function is as follows. Small GTPase-like component of the intraflagellar transport (IFT) complex B. The chain is Intraflagellar transport protein 22 homolog (IFT22) from Homo sapiens (Human).